We begin with the raw amino-acid sequence, 62 residues long: Large ribosomal subunit protein eL37 (62 aa).

Positions 20, 23, 35, and 38 each coordinate Zn(2+). The C4-type zinc-finger motif lies at 20-38; it reads CRRCGRVSYNVKKGYCAAC.

Belongs to the eukaryotic ribosomal protein eL37 family. Part of the 50S ribosomal subunit. The cofactor is Zn(2+).

Its function is as follows. Binds to the 23S rRNA. The chain is Large ribosomal subunit protein eL37 from Pyrococcus furiosus (strain ATCC 43587 / DSM 3638 / JCM 8422 / Vc1).